The chain runs to 57 residues: uncharacterized protein (57 aa).

Residues 26–57 (VVSTRKRLKQNTNTPPHYDTSEDEDEDNYYNY) are disordered. A compositionally biased stretch (acidic residues) spans 46–57 (SEDEDEDNYYNY).

This is an uncharacterized protein from Autographa californica nuclear polyhedrosis virus (AcMNPV).